The chain runs to 98 residues: C-C motif chemokine 19 (98 aa).

The signal sequence occupies residues 1 to 21 (MALLLALSLLVLWTSPAPTLS). 2 disulfides stabilise this stretch: C29–C55 and C30–C71.

This sequence belongs to the intercrine beta (chemokine CC) family. In terms of assembly, interacts with TNFAIP6 (via Link domain). In terms of tissue distribution, expressed at high levels in the lymph nodes, thymus and appendix. Intermediate levels seen in colon and trachea, while low levels found in spleen, small intestine, lung, kidney and stomach.

It localises to the secreted. In terms of biological role, may play a role not only in inflammatory and immunological responses but also in normal lymphocyte recirculation and homing. May play an important role in trafficking of T-cells in thymus, and T-cell and B-cell migration to secondary lymphoid organs. Binds to chemokine receptor CCR7. Recombinant CCL19 shows potent chemotactic activity for T-cells and B-cells but not for granulocytes and monocytes. Binds to atypical chemokine receptor ACKR4 and mediates the recruitment of beta-arrestin (ARRB1/2) to ACKR4. The sequence is that of C-C motif chemokine 19 (CCL19) from Homo sapiens (Human).